The following is a 256-amino-acid chain: Major prion protein (256 aa).

An N-terminal signal peptide occupies residues 1–24 (MVKSHIGSWILVLFVAMWSDVGLC). The interaction with ADGRG6 stretch occupies residues 25 to 41 (KKRPKPGGGWNTGGSRY). The interaction with GRB2, ERI3 and SYN1 stretch occupies residues 25–233 (KKRPKPGGGW…ESEAYYQRRA (209 aa)). A disordered region spans residues 28–110 (PKPGGGWNTG…QWNKPSKPKT (83 aa)). 5 repeat units span residues 54–62 (PQGGGGWGQ), 63–70 (PHGGGWGQ), 71–78 (PHGGGWGQ), 79–86 (PHGGGWGQ), and 87–95 (PHGGGGWGQ). Residues 54–95 (PQGGGGWGQPHGGGWGQPHGGGWGQPHGGGWGQPHGGGGWGQ) are 5 X 8 AA tandem repeats of P-H-G-G-G-W-G-Q. Residues 55–97 (QGGGGWGQPHGGGWGQPHGGGWGQPHGGGWGQPHGGGGWGQGG) are compositionally biased toward gly residues. 12 residues coordinate Cu(2+): H64, G65, G66, H72, G73, G74, H80, G81, G82, H88, G90, and G91. An intrachain disulfide couples C182 to C217. N-linked (GlcNAc...) asparagine glycans are attached at residues N184 and N200. A lipid anchor (GPI-anchor amidated alanine) is attached at A233. Positions 234-256 (SAILFSSPPVILLISFLIFLIVG) are cleaved as a propeptide — removed in mature form.

It belongs to the prion family. In terms of assembly, monomer and homodimer. Has a tendency to aggregate into amyloid fibrils containing a cross-beta spine, formed by a steric zipper of superposed beta-strands. Soluble oligomers may represent an intermediate stage on the path to fibril formation. Copper binding may promote oligomerization. Interacts with GRB2, APP, ERI3/PRNPIP and SYN1. Mislocalized cytosolically exposed PrP interacts with MGRN1; this interaction alters MGRN1 subcellular location and causes lysosomal enlargement. Interacts with APP. Interacts with KIAA1191. Interacts with ADGRG6.

It localises to the cell membrane. The protein resides in the golgi apparatus. Its primary physiological function is unclear. May play a role in neuronal development and synaptic plasticity. May be required for neuronal myelin sheath maintenance. May promote myelin homeostasis through acting as an agonist for ADGRG6 receptor. May play a role in iron uptake and iron homeostasis. Soluble oligomers are toxic to cultured neuroblastoma cells and induce apoptosis (in vitro). Association with GPC1 (via its heparan sulfate chains) targets PRNP to lipid rafts. Also provides Cu(2+) or Zn(2+) for the ascorbate-mediated GPC1 deaminase degradation of its heparan sulfate side chains. This Felis catus (Cat) protein is Major prion protein (PRNP).